A 339-amino-acid chain; its full sequence is tRNA N6-adenosine threonylcarbamoyltransferase (339 aa).

Fe cation is bound by residues histidine 111 and histidine 115. Substrate contacts are provided by residues 134–138 (VVSGG), aspartate 167, glycine 180, and asparagine 279. A Fe cation-binding site is contributed by aspartate 307.

It belongs to the KAE1 / TsaD family. Requires Fe(2+) as cofactor.

Its subcellular location is the cytoplasm. The enzyme catalyses L-threonylcarbamoyladenylate + adenosine(37) in tRNA = N(6)-L-threonylcarbamoyladenosine(37) in tRNA + AMP + H(+). Functionally, required for the formation of a threonylcarbamoyl group on adenosine at position 37 (t(6)A37) in tRNAs that read codons beginning with adenine. Is involved in the transfer of the threonylcarbamoyl moiety of threonylcarbamoyl-AMP (TC-AMP) to the N6 group of A37, together with TsaE and TsaB. TsaD likely plays a direct catalytic role in this reaction. This chain is tRNA N6-adenosine threonylcarbamoyltransferase, found in Syntrophobacter fumaroxidans (strain DSM 10017 / MPOB).